A 278-amino-acid polypeptide reads, in one-letter code: Undecaprenyl-diphosphatase (278 aa).

Helical transmembrane passes span 44–64, 84–104, 112–132, 187–207, 224–244, and 254–274; these read FLEM…MTIY, WQLW…AVPL, FNFM…FIWI, SVAA…YSGL, VWIL…VIRF, and FTVF…YAFI.

This sequence belongs to the UppP family.

The protein resides in the cell membrane. It catalyses the reaction di-trans,octa-cis-undecaprenyl diphosphate + H2O = di-trans,octa-cis-undecaprenyl phosphate + phosphate + H(+). Functionally, catalyzes the dephosphorylation of undecaprenyl diphosphate (UPP). Confers resistance to bacitracin. This chain is Undecaprenyl-diphosphatase, found in Streptococcus suis (strain 98HAH33).